We begin with the raw amino-acid sequence, 198 residues long: Auxin-binding protein 1 (198 aa).

The signal sequence occupies residues 1–33; that stretch reads MIVLSVGSASSSPIVVVFSVALLLFYFSETSLG. C36 and C189 are oxidised to a cystine. Zn(2+) is bound by residues H92, H94, and E98. The N-linked (GlcNAc...) asparagine glycan is linked to N130. H141 serves as a coordination point for Zn(2+). The Prevents secretion from ER motif lies at 195–198; it reads KDEL.

As to quaternary structure, homodimer. May interact with the GPI-anchored plasma membrane protein SKU5 and its family members. Interacts with TMK1 (via extracellular domain). Glycosylated. In terms of processing, ubiquitinated by RMA2, leading to proteasomal degradation.

The protein localises to the endoplasmic reticulum lumen. Its subcellular location is the cell membrane. Auxin receptor that controls cell elongation and cell division. Involved in embryonic morphogenesis. Acts on the cell cycle, endocycle, cell plate formation, and cell expansion and contributes to the control of auxin-related gene expression. Controls root meristem size and mediates auxin responsiveness. Involved in activation of ROP GTPases in response to auxin and regulation of clathrin-mediated endocytosis in roots. Acts as a positive factor in clathrin recruitment to the plasma membrane, thereby promoting endocytosis. Upon auxin binding, restricts the internalization of PIN proteins by inhibiting clathrin-mediated endocytosis. Promotes auxin-triggered phosphorylation status modulation of RAF-like kinases (e.g. RAF20 and RAF24). Involved in the regulation of polar auxin transport. Behaves as a negative regulator of the SCF(TIR1/AFB) signaling pathway, protecting AUX/IAA repressors from degradation. Regulates the expression of cell wall remodeling genes via an SCF(TIR1/AFB)-dependent pathway. Involved in the modulation of hemicellulose xyloglucan structure. Required for rapid auxin-mediated re-orientation of microtubules to regulate cell elongation in roots and dark-grown hypocotyls as well as asymmetric growth during gravitropic responses. Involved in the shade avoidance response. Forms with TMK1 a cell surface auxin perception complex that activates ROP signaling pathways. ABP1 sensing of auxin is important for the ABP1-TMK1 complex formation. Interacts functionally with phytochrome to regulate growth. In Arabidopsis thaliana (Mouse-ear cress), this protein is Auxin-binding protein 1.